The following is a 354-amino-acid chain: Uroporphyrinogen decarboxylase (354 aa).

Residues 27-31 (RQAGR), Asp-77, Tyr-154, Ser-209, and His-327 each bind substrate.

This sequence belongs to the uroporphyrinogen decarboxylase family. As to quaternary structure, homodimer.

It localises to the cytoplasm. The enzyme catalyses uroporphyrinogen III + 4 H(+) = coproporphyrinogen III + 4 CO2. It functions in the pathway porphyrin-containing compound metabolism; protoporphyrin-IX biosynthesis; coproporphyrinogen-III from 5-aminolevulinate: step 4/4. Functionally, catalyzes the decarboxylation of four acetate groups of uroporphyrinogen-III to yield coproporphyrinogen-III. The chain is Uroporphyrinogen decarboxylase from Shewanella putrefaciens (strain CN-32 / ATCC BAA-453).